The sequence spans 283 residues: Shikimate dehydrogenase (NADP(+)) (283 aa).

Residues 16–18 and T63 contribute to the shikimate site; that span reads SLS. The active-site Proton acceptor is the K67. D79 is a binding site for NADP(+). Shikimate contacts are provided by N88 and D103. NADP(+)-binding positions include 128-132, A223, and G243; that span reads GAGGA.

This sequence belongs to the shikimate dehydrogenase family. As to quaternary structure, homodimer.

It carries out the reaction shikimate + NADP(+) = 3-dehydroshikimate + NADPH + H(+). The protein operates within metabolic intermediate biosynthesis; chorismate biosynthesis; chorismate from D-erythrose 4-phosphate and phosphoenolpyruvate: step 4/7. Functionally, involved in the biosynthesis of the chorismate, which leads to the biosynthesis of aromatic amino acids. Catalyzes the reversible NADPH linked reduction of 3-dehydroshikimate (DHSA) to yield shikimate (SA). The chain is Shikimate dehydrogenase (NADP(+)) from Xanthomonas campestris pv. campestris (strain B100).